A 1518-amino-acid chain; its full sequence is Hormone receptor 4 (1518 aa).

5 disordered regions span residues 30-50 (RCSS…DLLA), 145-327 (TSST…KLSE), 380-587 (PSRI…QPQA), 672-820 (VGVG…SSVA), and 887-913 (SSNS…EPTD). Over residues 34-46 (DGESIADTSTSSP) the composition is skewed to polar residues. Low complexity-rich tracts occupy residues 145-189 (TSST…SSSG) and 208-219 (SSSSAISAAAAS). The segment covering 238-260 (EGGGPAGDGSGATGGGNTSGGST) has biased composition (gly residues). Over residues 291–323 (STTTTTGRPTLTPTNGVLSSASAGTGISTGSSA) the composition is skewed to low complexity. Residues 400–429 (QRERERERDRERDRERERERDRDREREREQ) are compositionally biased toward basic and acidic residues. Polar residues-rich tracts occupy residues 430–451 (SISS…QLSH) and 475–489 (RKSS…SQSM). Low complexity-rich tracts occupy residues 490 to 529 (QHLT…PHSL), 546 to 586 (HHQQ…QQPQ), 681 to 705 (GSVQ…QTPS), and 738 to 799 (GQSH…PSSS). Gly residues-rich tracts occupy residues 800–812 (SGGG…GVGG) and 892–902 (GLGGVGGGMGG). Positions 918–993 (PLVCMICEDK…QGMVLQAVRE (76 aa)) form a DNA-binding region, nuclear receptor. 2 NR C4-type zinc fingers span residues 921–941 (CMIC…CEGC) and 957–976 (CVAD…CQYC). 3 disordered regions span residues 1015 to 1101 (KHKK…AAVA), 1142 to 1210 (LLQA…LPPH), and 1341 to 1371 (KRRG…STPI). Low complexity predominate over residues 1021-1060 (QKQQQQAAQQQQQQAAAQQQHQQQQQHQQHQQHQQQQLHS). Basic residues predominate over residues 1061 to 1077 (PLHHHHHQGHQSHHAQQ). 2 stretches are compositionally biased toward low complexity: residues 1078–1101 (QHHP…AAVA) and 1144–1193 (QAPP…HHQQ). A compositionally biased stretch (gly residues) spans 1194 to 1205 (QGGGGGGAGGGA). Residues 1250–1518 (HALGMIQTLI…PFVLNSASIR (269 aa)) enclose the NR LBD domain. The span at 1351–1368 (HGSPASTPLSTPTGTPLS) shows a compositional bias: low complexity.

It belongs to the nuclear hormone receptor family. NR1 subfamily. During L2 and L3 stages, strong constitutive expression is seen in the ring gland. Lower expression is detected in specific neurons of the central nervous system (CNS) (at protein level).

The protein resides in the nucleus. Functionally, coordinates growth and maturation by mediating endocrine responses to the attainment of critical weight during larval development. Plays a central role in the genetic cascades triggered by the steroid hormone ecdysone at the onset of metamorphosis, acting as both a repressor of the early ecdysone-induced regulatory genes and an inducer of the ftz-f1 midprepupal competence factor. The chain is Hormone receptor 4 (Hr4) from Drosophila melanogaster (Fruit fly).